A 1249-amino-acid polypeptide reads, in one-letter code: Calmodulin-regulated spectrin-associated protein 3 (1249 aa).

Disordered regions lie at residues 183 to 205, 328 to 385, 430 to 457, 473 to 609, 632 to 696, 714 to 1029, and 1061 to 1111; these read KTEQEAAQRASPAAPADGAAPAQ, PDGH…SMSH, VSSDSLGPPRPAPARTPTQPPPEPGDLP, LLPD…RLEE, LGKS…HEGL, QRDM…SALA, and NNLG…TGPR. Thr184 bears the Phosphothreonine mark. The segment covering 189–205 has biased composition (low complexity); sequence AQRASPAAPADGAAPAQ. Residue Ser193 is modified to Phosphoserine. The Calponin-homology (CH) domain maps to 203 to 312; sequence PAQPSIRYRK…LVVMLAELFM (110 aa). Ser334, Ser341, Ser347, Ser351, Ser368, Ser373, and Ser382 each carry phosphoserine. Over residues 341-352 the composition is skewed to low complexity; the sequence is SPPQNNSGSSSP. Residues 364-383 are compositionally biased toward polar residues; the sequence is GGPQSPLRGSTGSLKSSPSM. A compositionally biased stretch (pro residues) spans 437–454; sequence PPRPAPARTPTQPPPEPG. Phosphoserine is present on residues Ser547, Ser554, and Ser560. Positions 568–579 are enriched in basic and acidic residues; sequence AERKKQLVKAEA. Low complexity predominate over residues 594-604; sequence EALSSEMSELS. The stretch at 594–628 forms a coiled coil; it reads EALSSEMSELSARLEEKRRAIEAQKRRIEAIFAKH. Residues 647-657 show a composition bias toward acidic residues; that stretch reads GEAEAEAEEAD. Ser685 is subject to Phosphoserine. A coiled-coil region spans residues 696-729; that stretch reads LGEYNRAVSKLSAALSSLQRDMQRLTDQQQRLLA. Over residues 731-741 the composition is skewed to pro residues; it reads PEAPGSAPPPA. Residues 754–779 are compositionally biased toward low complexity; it reads AASPSPARRVPATRRSPGPGPSQSPR. Position 769 is a phosphoserine (Ser769). At Thr799 the chain carries Phosphothreonine. A Phosphoserine modification is found at Ser814. Positions 814-825 are enriched in polar residues; the sequence is SPSQVPVQTRSS. Positions 889–940 are enriched in basic and acidic residues; sequence YKDEDKPEDEMAQKRASLLERQQRRAEEARRRKQWQEVEKEQRREEAARLAQ. The stretch at 896–935 forms a coiled coil; the sequence is EDEMAQKRASLLERQQRRAEEARRRKQWQEVEKEQRREEA. Residues 950–964 show a composition bias toward low complexity; the sequence is VSAVPMATPAPAARA. The segment covering 970–998 has biased composition (basic and acidic residues); that stretch reads VGPRKGDFTRQEYERRAQLKLMDDLDKVL. A Phosphoserine modification is found at Ser1074. The CKK domain maps to 1109 to 1243; that stretch reads GPRLYKEPSA…QGKKPTTPKK (135 aa).

The protein belongs to the CAMSAP1 family. In terms of assembly, interacts with PLEKHA7. Interacts with CAMSAP2. Interacts with KATNA1 and KATNB1; leading to regulate the length of CAMSAP3-decorated microtubule stretches. Interacts with AKAP9; regulating Golgi assembly in epithelial cells. Interacts with MACF1. Interacts with AKNA.

It localises to the cytoplasm. The protein localises to the cytoskeleton. Its subcellular location is the cell junction. The protein resides in the adherens junction. It is found in the cilium axoneme. It localises to the cilium basal body. Functionally, key microtubule-organizing protein that specifically binds the minus-end of non-centrosomal microtubules and regulates their dynamics and organization. Specifically recognizes growing microtubule minus-ends and autonomously decorates and stabilizes microtubule lattice formed by microtubule minus-end polymerization. Acts on free microtubule minus-ends that are not capped by microtubule-nucleating proteins or other factors and protects microtubule minus-ends from depolymerization. In addition, it also reduces the velocity of microtubule polymerization. Required for the biogenesis and the maintenance of zonula adherens by anchoring the minus-end of microtubules to zonula adherens and by recruiting the kinesin KIFC3 to those junctional sites. Required for orienting the apical-to-basal polarity of microtubules in epithelial cells: acts by tethering non-centrosomal microtubules to the apical cortex, leading to their longitudinal orientation. Plays a key role in early embryos, which lack centrosomes: accumulates at the microtubule bridges that connect pairs of cells and enables the formation of a non-centrosomal microtubule-organizing center that directs intracellular transport in the early embryo. Couples non-centrosomal microtubules with actin: interaction with MACF1 at the minus ends of non-centrosomal microtubules, tethers the microtubules to actin filaments, regulating focal adhesion size and cell migration. Plays a key role in the generation of non-centrosomal microtubules by accumulating in the pericentrosomal region and cooperating with KATNA1 to release non-centrosomal microtubules from the centrosome. Through the microtubule cytoskeleton, also regulates the organization of cellular organelles including the Golgi and the early endosomes. Through interaction with AKAP9, involved in translocation of Golgi vesicles in epithelial cells, where microtubules are mainly non-centrosomal. Plays an important role in motile cilia function by facilitatating proper orientation of basal bodies and formation of central microtubule pairs in motile cilia. The sequence is that of Calmodulin-regulated spectrin-associated protein 3 from Homo sapiens (Human).